The primary structure comprises 259 residues: Imidazole glycerol phosphate synthase subunit HisF (259 aa).

Catalysis depends on residues Asp-11 and Asp-130.

It belongs to the HisA/HisF family. As to quaternary structure, heterodimer of HisH and HisF.

The protein resides in the cytoplasm. It catalyses the reaction 5-[(5-phospho-1-deoxy-D-ribulos-1-ylimino)methylamino]-1-(5-phospho-beta-D-ribosyl)imidazole-4-carboxamide + L-glutamine = D-erythro-1-(imidazol-4-yl)glycerol 3-phosphate + 5-amino-1-(5-phospho-beta-D-ribosyl)imidazole-4-carboxamide + L-glutamate + H(+). The protein operates within amino-acid biosynthesis; L-histidine biosynthesis; L-histidine from 5-phospho-alpha-D-ribose 1-diphosphate: step 5/9. Functionally, IGPS catalyzes the conversion of PRFAR and glutamine to IGP, AICAR and glutamate. The HisF subunit catalyzes the cyclization activity that produces IGP and AICAR from PRFAR using the ammonia provided by the HisH subunit. The polypeptide is Imidazole glycerol phosphate synthase subunit HisF (Polaromonas sp. (strain JS666 / ATCC BAA-500)).